Consider the following 452-residue polypeptide: Cobyrinate a,c-diamide synthase (452 aa).

Positions 248–441 (RVAYALDAAF…LHIHFYQNLL (194 aa)) constitute a GATase cobBQ-type domain. C330 functions as the Nucleophile in the catalytic mechanism.

Belongs to the CobB/CbiA family. The cofactor is Mg(2+).

It catalyses the reaction cob(II)yrinate + 2 L-glutamine + 2 ATP + 2 H2O = cob(II)yrinate a,c diamide + 2 L-glutamate + 2 ADP + 2 phosphate + 2 H(+). Its pathway is cofactor biosynthesis; adenosylcobalamin biosynthesis; cob(II)yrinate a,c-diamide from sirohydrochlorin (anaerobic route): step 10/10. Functionally, catalyzes the ATP-dependent amidation of the two carboxylate groups at positions a and c of cobyrinate, using either L-glutamine or ammonia as the nitrogen source. The chain is Cobyrinate a,c-diamide synthase from Listeria monocytogenes serotype 4b (strain F2365).